The following is a 226-amino-acid chain: Cytidylate kinase (226 aa).

10–18 (GPASSGKST) is an ATP binding site.

Belongs to the cytidylate kinase family. Type 1 subfamily.

Its subcellular location is the cytoplasm. It catalyses the reaction CMP + ATP = CDP + ADP. It carries out the reaction dCMP + ATP = dCDP + ADP. The protein is Cytidylate kinase of Streptococcus thermophilus (strain ATCC BAA-491 / LMD-9).